Consider the following 251-residue polypeptide: tRNA (guanine-N(1)-)-methyltransferase (251 aa).

Residues G113 and 133-138 (IGDYVL) each bind S-adenosyl-L-methionine.

Belongs to the RNA methyltransferase TrmD family. As to quaternary structure, homodimer.

It is found in the cytoplasm. It catalyses the reaction guanosine(37) in tRNA + S-adenosyl-L-methionine = N(1)-methylguanosine(37) in tRNA + S-adenosyl-L-homocysteine + H(+). Functionally, specifically methylates guanosine-37 in various tRNAs. The polypeptide is tRNA (guanine-N(1)-)-methyltransferase (Methylococcus capsulatus (strain ATCC 33009 / NCIMB 11132 / Bath)).